The following is an 84-amino-acid chain: ATP synthase subunit c (84 aa).

2 helical membrane passes run isoleucine 9–isoleucine 29 and isoleucine 54–isoleucine 74.

This sequence belongs to the ATPase C chain family. As to quaternary structure, F-type ATPases have 2 components, F(1) - the catalytic core - and F(0) - the membrane proton channel. F(1) has five subunits: alpha(3), beta(3), gamma(1), delta(1), epsilon(1). F(0) has three main subunits: a(1), b(2) and c(10-14). The alpha and beta chains form an alternating ring which encloses part of the gamma chain. F(1) is attached to F(0) by a central stalk formed by the gamma and epsilon chains, while a peripheral stalk is formed by the delta and b chains.

The protein localises to the cell inner membrane. Its function is as follows. F(1)F(0) ATP synthase produces ATP from ADP in the presence of a proton or sodium gradient. F-type ATPases consist of two structural domains, F(1) containing the extramembraneous catalytic core and F(0) containing the membrane proton channel, linked together by a central stalk and a peripheral stalk. During catalysis, ATP synthesis in the catalytic domain of F(1) is coupled via a rotary mechanism of the central stalk subunits to proton translocation. In terms of biological role, key component of the F(0) channel; it plays a direct role in translocation across the membrane. A homomeric c-ring of between 10-14 subunits forms the central stalk rotor element with the F(1) delta and epsilon subunits. The sequence is that of ATP synthase subunit c from Pasteurella multocida (strain Pm70).